Reading from the N-terminus, the 127-residue chain is Protein ApaG (127 aa).

An ApaG domain is found at 3-127 (KSETYRIEVE…FMLAMPRVLH (125 aa)).

This is Protein ApaG from Azoarcus sp. (strain BH72).